A 123-amino-acid chain; its full sequence is Holo-[acyl-carrier-protein] synthase (123 aa).

Mg(2+)-binding residues include aspartate 8 and glutamate 60.

It belongs to the P-Pant transferase superfamily. AcpS family. Mg(2+) is required as a cofactor.

Its subcellular location is the cytoplasm. The enzyme catalyses apo-[ACP] + CoA = holo-[ACP] + adenosine 3',5'-bisphosphate + H(+). Functionally, transfers the 4'-phosphopantetheine moiety from coenzyme A to a Ser of acyl-carrier-protein. This chain is Holo-[acyl-carrier-protein] synthase, found in Ehrlichia chaffeensis (strain ATCC CRL-10679 / Arkansas).